We begin with the raw amino-acid sequence, 102 residues long: Small ribosomal subunit protein uS10 (102 aa).

Belongs to the universal ribosomal protein uS10 family. As to quaternary structure, part of the 30S ribosomal subunit.

Its function is as follows. Involved in the binding of tRNA to the ribosomes. The polypeptide is Small ribosomal subunit protein uS10 (Sulfolobus acidocaldarius (strain ATCC 33909 / DSM 639 / JCM 8929 / NBRC 15157 / NCIMB 11770)).